The primary structure comprises 237 residues: UPF0174 protein YaaW (237 aa).

It belongs to the UPF0174 family.

The protein is UPF0174 protein YaaW (yaaW) of Escherichia coli (strain K12).